A 423-amino-acid polypeptide reads, in one-letter code: Diaminobutyrate--2-oxoglutarate transaminase (423 aa).

K267 bears the N6-(pyridoxal phosphate)lysine mark.

Belongs to the class-III pyridoxal-phosphate-dependent aminotransferase family. Homohexamer. Requires pyridoxal 5'-phosphate as cofactor.

It carries out the reaction L-2,4-diaminobutanoate + 2-oxoglutarate = L-aspartate 4-semialdehyde + L-glutamate. Its pathway is amine and polyamine biosynthesis; ectoine biosynthesis; L-ectoine from L-aspartate 4-semialdehyde: step 1/3. Functionally, catalyzes reversively the conversion of L-aspartate beta-semialdehyde (ASA) to L-2,4-diaminobutyrate (DABA) by transamination with L-glutamate. In Chromohalobacter salexigens (strain ATCC BAA-138 / DSM 3043 / CIP 106854 / NCIMB 13768 / 1H11), this protein is Diaminobutyrate--2-oxoglutarate transaminase (ectB).